Consider the following 119-residue polypeptide: Ribonuclease P protein component (119 aa).

The protein belongs to the RnpA family. As to quaternary structure, consists of a catalytic RNA component (M1 or rnpB) and a protein subunit.

The catalysed reaction is Endonucleolytic cleavage of RNA, removing 5'-extranucleotides from tRNA precursor.. RNaseP catalyzes the removal of the 5'-leader sequence from pre-tRNA to produce the mature 5'-terminus. It can also cleave other RNA substrates such as 4.5S RNA. The protein component plays an auxiliary but essential role in vivo by binding to the 5'-leader sequence and broadening the substrate specificity of the ribozyme. This chain is Ribonuclease P protein component, found in Salmonella paratyphi A (strain AKU_12601).